The sequence spans 369 residues: Endophilin-A (369 aa).

In terms of domain architecture, BAR spans 18 to 248 (TEKMGGAEGT…LQEKRSEAES (231 aa)). Residues 227 to 247 (QCADVLRGLQETLQEKRSEAE) are a coiled coil. Positions 266-295 (GGGGGLNEDGTPSHISSSASPLPSPMRSPA) are disordered. Over residues 277 to 294 (PSHISSSASPLPSPMRSP) the composition is skewed to low complexity. Residues 305 to 364 (QQQPCCQALYDFEPENPGELAFKENDIITLLNRVDDNWFEGAVNGRTGYFPQSYVQVQVP) form the SH3 domain.

It belongs to the endophilin family.

It is found in the cytoplasm. The protein localises to the membrane. Its function is as follows. Required presynaptically at the neuromuscular junction. Implicated in synaptic vesicle endocytosis. The sequence is that of Endophilin-A from Drosophila erecta (Fruit fly).